The following is a 200-amino-acid chain: Probable GTP-binding protein EngB (200 aa).

Positions 24–198 constitute an EngB-type G domain; it reads EGMEVAFAGR…QAQLDEWLGI (175 aa). Residues 32 to 39, 59 to 63, 77 to 80, 144 to 147, and 177 to 179 contribute to the GTP site; these read GRSNVGKS, GRTQM, DLPG, TKSD, and FSA. The Mg(2+) site is built by Ser39 and Thr61.

It belongs to the TRAFAC class TrmE-Era-EngA-EngB-Septin-like GTPase superfamily. EngB GTPase family. The cofactor is Mg(2+).

Its function is as follows. Necessary for normal cell division and for the maintenance of normal septation. The chain is Probable GTP-binding protein EngB from Nitrosococcus oceani (strain ATCC 19707 / BCRC 17464 / JCM 30415 / NCIMB 11848 / C-107).